We begin with the raw amino-acid sequence, 157 residues long: MFFSGLFQRKSDAPVTTPAELADAIGLSYDTYTGKQISSQRAMRLTAVFSCVRVLAESVGMLPCNLYHLNGSLKQRATGERLHKLISTHPNGYMTPQEFWELVVTCLCLRGNFYAYKVKAFGEVAELLPVDPGCVVYALGRCQRWPEGDRRECYSAR.

This sequence belongs to the phage portal family.

The protein is Protein BeeE (beeE) of Escherichia coli (strain K12).